The following is a 380-amino-acid chain: MNFELTKEQQMVREMVKDFAKKEIAPHAEHVDQTGEFPMQTFKKMGELGLMGIPFPEEYGGSGGDTISYALAVEEVGKACGSTGLSYAAAVSLGASPLYYFGTEEQKQTHLTPLASGTALGSFGLTEPNAGSDAGGTQTKAISNGDEYVINGEKCWITNASYARTVIVTAVTGKNKDGKNIISALIVPTDTPGLTITSPYDKMGVRGSNTAEILLEDVRVPAANLLGDPTKGFKQFLYTLDGGRISIAALAVGIAQAALDASLAYAKERKQFGQPISSFQAIQFKLADMAMEIDLARQMVLKAAWLKDHNRPFTKEAAYAKLFASEMATRACNQAIQIHGGSGYMKEYGVERMLRDAKLMEIGEGTSEIQRLVIARQLLK.

Residues 123-132 (FGLTEPNAGS), 156-158 (WIT), Arg269, and 337-341 (QIHGG) each bind FAD. Residue Glu364 is the Proton acceptor of the active site. 366-368 (TSE) is a binding site for FAD.

This sequence belongs to the acyl-CoA dehydrogenase family. FAD is required as a cofactor.

The catalysed reaction is a 2,3-saturated acyl-CoA + A = a 2,3-dehydroacyl-CoA + AH2. The polypeptide is Probable acyl-CoA dehydrogenase YngJ (yngJ) (Bacillus subtilis (strain 168)).